The sequence spans 718 residues: Polyribonucleotide nucleotidyltransferase (718 aa).

Residues Asp496 and Asp502 each coordinate Mg(2+). Residues 563-622 form the KH domain; that stretch reads PRLLTIKIDSDMIGLVIGPGGKTIKGITEETGAKIDIEDDGTVTISAVDENKAKRARNII. Residues 632-700 form the S1 motif domain; sequence GDVYAGRITR…NKGRINLTRL (69 aa).

It belongs to the polyribonucleotide nucleotidyltransferase family. Mg(2+) serves as cofactor.

It is found in the cytoplasm. The enzyme catalyses RNA(n+1) + phosphate = RNA(n) + a ribonucleoside 5'-diphosphate. Functionally, involved in mRNA degradation. Catalyzes the phosphorolysis of single-stranded polyribonucleotides processively in the 3'- to 5'-direction. The polypeptide is Polyribonucleotide nucleotidyltransferase (Nostoc punctiforme (strain ATCC 29133 / PCC 73102)).